Reading from the N-terminus, the 526-residue chain is Ferrochelatase-2, chloroplastic (526 aa).

The protein belongs to the ferrochelatase family.

It is found in the plastid. Its subcellular location is the chloroplast. It carries out the reaction heme b + 2 H(+) = protoporphyrin IX + Fe(2+). It functions in the pathway porphyrin-containing compound metabolism; protoheme biosynthesis; protoheme from protoporphyrin-IX: step 1/1. Functionally, catalyzes the ferrous insertion into protoporphyrin IX. This chain is Ferrochelatase-2, chloroplastic, found in Oryza sativa subsp. japonica (Rice).